Reading from the N-terminus, the 146-residue chain is 3-hydroxyacyl-[acyl-carrier-protein] dehydratase FabZ (146 aa).

H49 is a catalytic residue.

It belongs to the thioester dehydratase family. FabZ subfamily.

The protein resides in the cytoplasm. The enzyme catalyses a (3R)-hydroxyacyl-[ACP] = a (2E)-enoyl-[ACP] + H2O. Functionally, involved in unsaturated fatty acids biosynthesis. Catalyzes the dehydration of short chain beta-hydroxyacyl-ACPs and long chain saturated and unsaturated beta-hydroxyacyl-ACPs. In Pseudomonas fluorescens (strain ATCC BAA-477 / NRRL B-23932 / Pf-5), this protein is 3-hydroxyacyl-[acyl-carrier-protein] dehydratase FabZ.